The following is a 1558-amino-acid chain: Calmodulin-regulated spectrin-associated protein 1-B (1558 aa).

One can recognise a Calponin-homology (CH) domain in the interval 231–346 (WYWKLVPVRY…FIAELFWWFE (116 aa)). Composition is skewed to polar residues over residues 400 to 417 (VQNSPEVCNSNKGSSGFS), 440 to 450 (ACRNRSNSLTQ), and 504 to 516 (ASTVTPKHQSHPG). 7 disordered regions span residues 400–464 (VQNS…SDKR), 504–523 (ASTVTPKHQSHPGQGSVRRI), 551–585 (NDITLTNSEDTERQGVTPGAKSIWGRQEDASSDSR), 602–675 (AKEK…APGQ), 737–790 (TKEL…VASG), 803–850 (QRFG…QNKD), and 943–968 (DRSKEAEEPEKASCEWAGGGTVSSSP). The segment covering 602 to 620 (AKEKSISLNKEEESGEGRQ) has biased composition (basic and acidic residues). A compositionally biased stretch (polar residues) spans 643-658 (QTLNRTFTPNTSSEFE). The segment covering 737 to 772 (TKELHPDKKQHFEEEVESAKLREDMNVKEHEDKDGG) has biased composition (basic and acidic residues). Composition is skewed to low complexity over residues 776 to 790 (SSPGQQSQVSSVASG) and 812 to 822 (RSSTSSSQRTT). A coiled-coil region spans residues 849–887 (KDNANMLASELVQLHMQLEEKRRAIESQKKKMEILTARQ). The segment covering 943–955 (DRSKEAEEPEKAS) has biased composition (basic and acidic residues). Positions 971–1004 (VEEEVDLNECNRSIELLNEAIGSIQQQMMQLSLQ) form a coiled coil. 4 disordered regions span residues 1041–1131 (FVEP…TFHL), 1257–1293 (LRKQQLEAESEQKRDETRRKAEEERIRKEEEKARREL), 1305–1344 (ELCEEQEQPQPKPKTKPKKQRLKSVVKEEPSIDPLPKCPA), and 1360–1414 (LASV…ITST). Residues 1080–1090 (SSTPTPTDSPS) show a composition bias toward low complexity. Positions 1106–1115 (DFVQSSVRSE) are enriched in polar residues. Residues 1243–1303 (AFLLKQQRKA…IKQEYLRKKQ (61 aa)) are a coiled coil. Positions 1317 to 1328 (PKTKPKKQRLKS) are enriched in basic residues. One can recognise a CKK domain in the interval 1421–1555 (GPKLFKEPSA…QAKRPAGPKK (135 aa)).

Belongs to the CAMSAP1 family.

It localises to the cytoplasm. It is found in the cytoskeleton. Its function is as follows. Key microtubule-organizing protein that specifically binds the minus-end of non-centrosomal microtubules and regulates their dynamics and organization. Specifically recognizes growing microtubule minus-ends and stabilizes microtubules. Acts on free microtubule minus-ends that are not capped by microtubule-nucleating proteins or other factors and protects microtubule minus-ends from depolymerization. In contrast to camsap2 and camsap3, tracks along the growing tips of minus-end microtubules without significantly affecting the polymerization rate: binds at the very tip of the microtubules minus-end and acts as a minus-end tracking protein (-TIP) that dissociates from microtubules after allowing tubulin incorporation. Through interaction with spectrin may regulate neurite outgrowth. This chain is Calmodulin-regulated spectrin-associated protein 1-B (camsap1b), found in Danio rerio (Zebrafish).